Reading from the N-terminus, the 55-residue chain is ATP synthase F(0) complex subunit 8 (55 aa).

Residues 4–24 (LNPAPWFTILVFSWMIFLAII) traverse the membrane as a helical segment. Over residues 32–41 (TSPNDSSPLS) the composition is skewed to polar residues. The segment at 32 to 55 (TSPNDSSPLSTEKHKTESWDWPWQ) is disordered.

It belongs to the ATPase protein 8 family. Component of the ATP synthase complex composed at least of ATP5F1A/subunit alpha, ATP5F1B/subunit beta, ATP5MC1/subunit c (homooctomer), MT-ATP6/subunit a, MT-ATP8/subunit 8, ATP5ME/subunit e, ATP5MF/subunit f, ATP5MG/subunit g, ATP5MK/subunit k, ATP5MJ/subunit j, ATP5F1C/subunit gamma, ATP5F1D/subunit delta, ATP5F1E/subunit epsilon, ATP5PF/subunit F6, ATP5PB/subunit b, ATP5PD/subunit d, ATP5PO/subunit OSCP. ATP synthase complex consists of a soluble F(1) head domain (subunits alpha(3) and beta(3)) - the catalytic core - and a membrane F(0) domain - the membrane proton channel (subunits c, a, 8, e, f, g, k and j). These two domains are linked by a central stalk (subunits gamma, delta, and epsilon) rotating inside the F1 region and a stationary peripheral stalk (subunits F6, b, d, and OSCP).

It is found in the mitochondrion membrane. In terms of biological role, subunit 8, of the mitochondrial membrane ATP synthase complex (F(1)F(0) ATP synthase or Complex V) that produces ATP from ADP in the presence of a proton gradient across the membrane which is generated by electron transport complexes of the respiratory chain. ATP synthase complex consist of a soluble F(1) head domain - the catalytic core - and a membrane F(1) domain - the membrane proton channel. These two domains are linked by a central stalk rotating inside the F(1) region and a stationary peripheral stalk. During catalysis, ATP synthesis in the catalytic domain of F(1) is coupled via a rotary mechanism of the central stalk subunits to proton translocation. In vivo, can only synthesize ATP although its ATP hydrolase activity can be activated artificially in vitro. Part of the complex F(0) domain. In Formosania lacustris (Oriental stream loach), this protein is ATP synthase F(0) complex subunit 8.